A 99-amino-acid polypeptide reads, in one-letter code: Acylphosphatase-2 (99 aa).

Position 2 is an N-acetylserine (serine 2). Positions 9 to 99 (SVDYEVFGRV…LEYSSFNIRY (91 aa)) constitute an Acylphosphatase-like domain. Residues arginine 24 and asparagine 42 contribute to the active site. The residue at position 93 (serine 93) is a Phosphoserine.

The protein belongs to the acylphosphatase family.

The enzyme catalyses an acyl phosphate + H2O = a carboxylate + phosphate + H(+). In terms of biological role, its physiological role is not yet clear. The sequence is that of Acylphosphatase-2 (ACYP2) from Bos taurus (Bovine).